The chain runs to 446 residues: Minor fimbrium tip subunit Mfa3 (446 aa).

Residues 1–20 (MMQLKKRYFALILLLFLWSG) form the signal peptide. Cys-21 carries the N-palmitoyl cysteine lipid modification. The S-diacylglycerol cysteine moiety is linked to residue Cys-21. The propeptide occupies 21 to 43 (CDRGVDPQPDPLQPDVYLLVNAR).

It belongs to the bacteroidetes fimbrillin superfamily. FimB/Mfa2 family. As to quaternary structure, component of the fimbrium tip. Minor fimbriae are composed of a structural subunit, most often Mfa1, and the accessory subunits Mfa3, Mfa4 and Mfa5. Fimbrium assembly occurs by linear, head-to-tail oligomerization of fimbrial subunits. This is mediated via insertion of a C-terminal beta-strand from one subunit into a groove in the N-terminal domain of the following subunit. Mfa3 is required for Mfa4 and Mfa5 insertion into the fimbrium.

Its subcellular location is the fimbrium. The protein resides in the cell outer membrane. In terms of biological role, tip subunit of the minor fimbriae. These filamentous pili are attached to the cell surface; they mediate biofilm formation, adhesion onto host cells and onto other bacteria that are part of the oral microbiome. They play an important role in invasion of periodontal tissues and are recognized as major virulence factors. Fimbrium subunits from different strains have highly divergent sequences, and this correlates with pathogenicity. The protein is Minor fimbrium tip subunit Mfa3 (mfa3) of Porphyromonas gingivalis (strain ATCC 33277 / DSM 20709 / CIP 103683 / JCM 12257 / NCTC 11834 / 2561).